The sequence spans 1079 residues: Error-prone DNA polymerase (1079 aa).

Belongs to the DNA polymerase type-C family. DnaE2 subfamily.

It localises to the cytoplasm. It catalyses the reaction DNA(n) + a 2'-deoxyribonucleoside 5'-triphosphate = DNA(n+1) + diphosphate. In terms of biological role, DNA polymerase involved in damage-induced mutagenesis and translesion synthesis (TLS). It is not the major replicative DNA polymerase. This chain is Error-prone DNA polymerase, found in Ralstonia pickettii (strain 12J).